Here is a 184-residue protein sequence, read N- to C-terminus: Photosystem I assembly protein Ycf4 (184 aa).

2 consecutive transmembrane segments (helical) span residues 19-39 (ISNF…VLVG) and 64-84 (LVMS…WCTI).

It belongs to the Ycf4 family.

It is found in the plastid. The protein localises to the chloroplast thylakoid membrane. Its function is as follows. Seems to be required for the assembly of the photosystem I complex. This Oenothera elata subsp. hookeri (Hooker's evening primrose) protein is Photosystem I assembly protein Ycf4.